We begin with the raw amino-acid sequence, 70 residues long: SPbeta prophage-derived uncharacterized protein YotJ (70 aa).

The sequence is that of SPbeta prophage-derived uncharacterized protein YotJ (yotJ) from Bacillus subtilis (strain 168).